Reading from the N-terminus, the 508-residue chain is PTS system mannitol-specific EIICB component (508 aa).

Topologically, residues 1 to 30 (MSQTETQENKGLGRKVQAFGSFLSSMIMPN) are cytoplasmic. The 333-residue stretch at 19 to 351 (FGSFLSSMIM…LKFTKEPEED (333 aa)) folds into the PTS EIIC type-2 domain. The chain crosses the membrane as a helical span at residues 31–52 (IGAFIAWGFIAAIFIDGGWWPN). Residues 53-56 (KDLS) are Extracellular-facing. A helical transmembrane segment spans residues 57 to 77 (ELAGPMISYLIPLLIAYSGGR). Over 78–141 (LIHEMRGGII…QGFEMLFNNF (64 aa)) the chain is Cytoplasmic. Residues 142–163 (SAGILGFIMTIVGFKILAPIME) traverse the membrane as a helical segment. The Extracellular portion of the chain corresponds to 164 to 172 (FIMHILSLA). The chain crosses the membrane as a helical span at residues 173 to 193 (VEALVHAHLLPLVSIIVEPAK). Residues 194–280 (IVFLNNAINH…VLMRPLLFIA (87 aa)) lie on the Cytoplasmic side of the membrane. The helical transmembrane segment at 281-300 (VILGGMTGVATYSLLDFGFK) threads the bilayer. Over 301–320 (SPASPGSFIVYMLNAPKGEF) the chain is Extracellular. A helical membrane pass occupies residues 321–342 (LHMVLGVLLAAIVSFIVAALIL). Over 343-508 (KFTKEPEEDL…RYDELLENLK (166 aa)) the chain is Cytoplasmic. The tract at residues 355–400 (ATEKMEASKGKKSSVSSKLKGNEDNNATSTTASTSTSENNEEQSEE) is disordered. Residues 367 to 392 (SSVSSKLKGNEDNNATSTTASTSTSE) show a composition bias toward low complexity. Residues 420–508 (NHVIFACDAG…RYDELLENLK (89 aa)) form the PTS EIIB type-2 domain. The Phosphocysteine intermediate; for EIIB activity role is filled by cysteine 426. Cysteine 426 carries the post-translational modification Phosphocysteine; by EIIA.

As to quaternary structure, homodimer.

Its subcellular location is the cell membrane. It catalyses the reaction D-mannitol(out) + N(pros)-phospho-L-histidyl-[protein] = D-mannitol 1-phosphate(in) + L-histidyl-[protein]. The phosphoenolpyruvate-dependent sugar phosphotransferase system (sugar PTS), a major carbohydrate active transport system, catalyzes the phosphorylation of incoming sugar substrates concomitantly with their translocation across the cell membrane. The enzyme II CmtAB PTS system is involved in D-mannitol transport. This chain is PTS system mannitol-specific EIICB component (mtlA), found in Staphylococcus saprophyticus subsp. saprophyticus (strain ATCC 15305 / DSM 20229 / NCIMB 8711 / NCTC 7292 / S-41).